We begin with the raw amino-acid sequence, 331 residues long: Phosphate acyltransferase (331 aa).

It belongs to the PlsX family. Homodimer. Probably interacts with PlsY.

Its subcellular location is the cytoplasm. It carries out the reaction a fatty acyl-[ACP] + phosphate = an acyl phosphate + holo-[ACP]. The protein operates within lipid metabolism; phospholipid metabolism. Catalyzes the reversible formation of acyl-phosphate (acyl-PO(4)) from acyl-[acyl-carrier-protein] (acyl-ACP). This enzyme utilizes acyl-ACP as fatty acyl donor, but not acyl-CoA. In Lactococcus lactis subsp. lactis (strain IL1403) (Streptococcus lactis), this protein is Phosphate acyltransferase.